The following is a 261-amino-acid chain: Enoyl-[acyl-carrier-protein] reductase [NADH] FabI (261 aa).

Residues G15, 21-22 (SI), Q42, 66-67 (DV), and M94 contribute to the NAD(+) site. A97 lines the substrate pocket. Catalysis depends on proton acceptor residues Y147 and Y157. Residues K164 and 193 to 197 (IKTLA) each bind NAD(+).

Belongs to the short-chain dehydrogenases/reductases (SDR) family. FabI subfamily. As to quaternary structure, homotetramer.

The catalysed reaction is a 2,3-saturated acyl-[ACP] + NAD(+) = a (2E)-enoyl-[ACP] + NADH + H(+). Its pathway is lipid metabolism; fatty acid biosynthesis. Catalyzes the reduction of a carbon-carbon double bond in an enoyl moiety that is covalently linked to an acyl carrier protein (ACP). Involved in the elongation cycle of fatty acid which are used in the lipid metabolism. This is Enoyl-[acyl-carrier-protein] reductase [NADH] FabI (fabI) from Rickettsia prowazekii (strain Madrid E).